A 137-amino-acid polypeptide reads, in one-letter code: Large ribosomal subunit protein uL16 (137 aa).

Positions 1–21 are enriched in basic residues; the sequence is MLSPKKVKFRKRQKGRLKGKA. Residues 1-22 are disordered; that stretch reads MLSPKKVKFRKRQKGRLKGKAQ.

Belongs to the universal ribosomal protein uL16 family. Part of the 50S ribosomal subunit.

Its function is as follows. Binds 23S rRNA and is also seen to make contacts with the A and possibly P site tRNAs. In Maridesulfovibrio salexigens (strain ATCC 14822 / DSM 2638 / NCIMB 8403 / VKM B-1763) (Desulfovibrio salexigens), this protein is Large ribosomal subunit protein uL16.